Reading from the N-terminus, the 356-residue chain is Putative zinc finger protein At1g68190 (356 aa).

Zn(2+) contacts are provided by Cys14, Cys17, Cys37, His42, Cys57, Cys60, Cys80, and His85. The B box-type 1; atypical zinc-finger motif lies at 14 to 56 (CEFCKAYRAVVYCIADTANLCLTCDAKVHSANSLSGRHLRTVL). The B box-type 2; atypical zinc-finger motif lies at 57 to 97 (CDSCKNQPCVVRCFDHKMFLCHGCNDKFHGGGSSEHRRRDL). Residues 159–178 (ENGSSSLTERGDPSPLELPK) form a disordered region.

It belongs to the CONSTANS family.

It is found in the nucleus. The sequence is that of Putative zinc finger protein At1g68190 from Arabidopsis thaliana (Mouse-ear cress).